The chain runs to 995 residues: Bifunctional glutamine synthetase adenylyltransferase/adenylyl-removing enzyme (995 aa).

The interval methionine 1 to leucine 487 is adenylyl removase. The adenylyl transferase stretch occupies residues alanine 492–serine 995.

It belongs to the GlnE family. Mg(2+) is required as a cofactor.

The enzyme catalyses [glutamine synthetase]-O(4)-(5'-adenylyl)-L-tyrosine + phosphate = [glutamine synthetase]-L-tyrosine + ADP. The catalysed reaction is [glutamine synthetase]-L-tyrosine + ATP = [glutamine synthetase]-O(4)-(5'-adenylyl)-L-tyrosine + diphosphate. Functionally, involved in the regulation of glutamine synthetase GlnA, a key enzyme in the process to assimilate ammonia. When cellular nitrogen levels are high, the C-terminal adenylyl transferase (AT) inactivates GlnA by covalent transfer of an adenylyl group from ATP to specific tyrosine residue of GlnA, thus reducing its activity. Conversely, when nitrogen levels are low, the N-terminal adenylyl removase (AR) activates GlnA by removing the adenylyl group by phosphorolysis, increasing its activity. The regulatory region of GlnE binds the signal transduction protein PII (GlnB) which indicates the nitrogen status of the cell. In Mycobacterium marinum (strain ATCC BAA-535 / M), this protein is Bifunctional glutamine synthetase adenylyltransferase/adenylyl-removing enzyme.